Reading from the N-terminus, the 332-residue chain is Zinc finger protein CONSTANS-LIKE 13 (332 aa).

Residues Cys13, Cys16, Cys36, His41, Cys56, Cys59, Cys79, and His84 each coordinate Zn(2+). Residues 13–55 form a B box-type 1; atypical zinc finger; that stretch reads CDYCDSSVALVYCKADSAKLCLACDKQVHVANQLFAKHFRSLL. Residues 56–96 form a B box-type 2; atypical zinc finger; the sequence is CDSCNESPSSLFCETERSVLCQNCDWQHHTASSSLHSRRPF. The CCT domain occupies 287–329; it reads RNSALSRYKEKKKSRRYEKHIRYESRKVRAESRTRIRGRFAKA.

This sequence belongs to the CONSTANS family.

The protein resides in the nucleus. This Arabidopsis thaliana (Mouse-ear cress) protein is Zinc finger protein CONSTANS-LIKE 13 (COL13).